The chain runs to 239 residues: Purine nucleoside phosphorylase DeoD-type (239 aa).

H5 serves as a coordination point for a purine D-ribonucleoside. Phosphate contacts are provided by residues G21, R25, R44, and 88–91 (RVGS). A purine D-ribonucleoside is bound by residues 180 to 182 (EME) and 204 to 205 (SD). D205 serves as the catalytic Proton donor.

Belongs to the PNP/UDP phosphorylase family. As to quaternary structure, homohexamer; trimer of homodimers.

It catalyses the reaction a purine D-ribonucleoside + phosphate = a purine nucleobase + alpha-D-ribose 1-phosphate. The enzyme catalyses a purine 2'-deoxy-D-ribonucleoside + phosphate = a purine nucleobase + 2-deoxy-alpha-D-ribose 1-phosphate. Its function is as follows. Catalyzes the reversible phosphorolytic breakdown of the N-glycosidic bond in the beta-(deoxy)ribonucleoside molecules, with the formation of the corresponding free purine bases and pentose-1-phosphate. The polypeptide is Purine nucleoside phosphorylase DeoD-type (Cronobacter sakazakii (strain ATCC BAA-894) (Enterobacter sakazakii)).